The chain runs to 860 residues: Leucine--tRNA ligase (860 aa).

Positions 42–52 match the 'HIGH' region motif; that stretch reads PYPSGRLHMGH. The short motif at 619 to 623 is the 'KMSKS' region element; that stretch reads KMSKS. K622 contacts ATP.

This sequence belongs to the class-I aminoacyl-tRNA synthetase family.

The protein localises to the cytoplasm. The enzyme catalyses tRNA(Leu) + L-leucine + ATP = L-leucyl-tRNA(Leu) + AMP + diphosphate. The protein is Leucine--tRNA ligase of Yersinia enterocolitica serotype O:8 / biotype 1B (strain NCTC 13174 / 8081).